A 765-amino-acid polypeptide reads, in one-letter code: Glucosamine inositolphosphorylceramide transferase 1 (765 aa).

The next 3 membrane-spanning stretches (helical) occupy residues 43-63, 394-414, and 476-496; these read FFAS…WFVF, VILG…LGFL, and MGKF…CVGV. Residues Asn553, 577–582, 598–600, Arg628, and 683–687 contribute to the substrate site; these read NSLNNR, DDD, and FNCED. Asp600 is a Mn(2+) binding site. Cysteines 685 and 738 form a disulfide. Asp687 is an active-site residue.

Belongs to the glycosyltransferase 64 family. Requires Mn(2+) as cofactor. As to expression, specifically and highly expressed in developing embryos and mature seeds. Also detected at low levels in stigma and pollen.

It is found in the membrane. It carries out the reaction an N-(2R-hydroxy-very-long-chain fatty acyl)-(R)-4-hydroxysphingoid base + a 1,2-diacyl-sn-glycero-3-phospho-(1D-myo-inositol) = a 1D-myo-inositol-1-phospho-N-[(R)-2-hydroxy-very-long-chain fatty acyl]-(R)-4-hydroxysphingoid base + a 1,2-diacyl-sn-glycerol. Its pathway is sphingolipid metabolism. Glycosyltransferase that mediates the glycosylation of glycosylinositol phosphorylceramides (GIPCs), the major sphingolipids in the plasma membrane; acts as a HexN(Ac)-specific GIPC sugar transferase and accepts glucosamine (GlcN) and N-acetylglucosamine (GlcNAc) as the sugar unit. Responsible for the glycosylation of a subgroup of GIPCs found in seeds and pollen that contain GlcNAc and GlcN (GlcN(Ac)). Maybe involved in the maintenance of cell-cell adhesion. This Arabidopsis thaliana (Mouse-ear cress) protein is Glucosamine inositolphosphorylceramide transferase 1.